A 365-amino-acid chain; its full sequence is MATLSSLLLTALLWVPVGTLTCYGDSGQPVDWFVVYKLPAHTGSGDATQNGLRYKYFDEHSEDWSDGVGFINSTTGAVGRSLLPLYRNNNSQLAFVLYNDQPPKSSESKDSSSRGHTKGVLLLDQEGGFWLIHSVPNFPPRASSAVYSWPPGAQKYGQTLICVSFPLTQFLDISKQLTYTYPLVYDHRLEGDFAQKFPYLEEVVKGHHVRQGPWNSSVTLTSKKGATFQSFAKFGNFGDDLYSGWLSEALGSTLQVQFWQRSSGILPSNCSGAQHVFDVTQTAFPGPAGPAFNATEDHSKWCVTPKGPWACVGDMNRNQREEHRGGGTLCAQMLWKAFKPLVKAWEPCEKKSRAYSLGSPAGLWT.

The first 19 residues, 1–19 (MATLSSLLLTALLWVPVGT), serve as a signal peptide directing secretion. The cysteines at positions 22 and 162 are disulfide-linked. N-linked (GlcNAc...) asparagine glycans are attached at residues N215, N269, and N293. 2 disulfide bridges follow: C270–C348 and C311–C330. H298 is a catalytic residue.

It belongs to the DNase II family.

It is found in the lysosome. The catalysed reaction is Endonucleolytic cleavage to nucleoside 3'-phosphates and 3'-phosphooligonucleotide end-products.. Functionally, hydrolyzes DNA under acidic conditions with a preference for double-stranded DNA. Plays a major role in the clearance of nucleic acids generated through apoptosis, hence preventing autoinflammation. Necessary for proper fetal development and for definitive erythropoiesis in fetal liver and bone marrow, where it degrades nuclear DNA expelled from erythroid precursor cells. This is Deoxyribonuclease-2-alpha (DNASE2) from Bos taurus (Bovine).